The primary structure comprises 347 residues: Protein-arginine kinase (347 aa).

One can recognise a Phosphagen kinase C-terminal domain in the interval 22-247 (LVVSTRIRLA…EQVIQAERHA (226 aa)). ATP-binding positions include 25 to 29 (STRIR), H85, R118, 169 to 173 (RASVM), and 200 to 205 (RGRYGE). The RDXXRA motif of the pArg binding pocket involved in allosteric regulation motif lies at 330-335 (RDRERA).

Belongs to the ATP:guanido phosphotransferase family.

The catalysed reaction is L-arginyl-[protein] + ATP = N(omega)-phospho-L-arginyl-[protein] + ADP + H(+). With respect to regulation, appears to be allosterically activated by the binding of pArg-containing polypeptides to the pArg-binding pocket localized in the C-terminal domain of McsB. Its function is as follows. Catalyzes the specific phosphorylation of arginine residues in proteins. The chain is Protein-arginine kinase from Exiguobacterium sp. (strain ATCC BAA-1283 / AT1b).